The sequence spans 229 residues: Flagellar L-ring protein (229 aa).

Positions 1-25 (MKQVRLLPSAAVRAACALAAAALAG) are cleaved as a signal peptide. Cys26 carries N-palmitoyl cysteine lipidation. Cys26 carries S-diacylglycerol cysteine lipidation.

This sequence belongs to the FlgH family. The basal body constitutes a major portion of the flagellar organelle and consists of four rings (L,P,S, and M) mounted on a central rod.

It localises to the cell outer membrane. Its subcellular location is the bacterial flagellum basal body. Assembles around the rod to form the L-ring and probably protects the motor/basal body from shearing forces during rotation. In Burkholderia multivorans (strain ATCC 17616 / 249), this protein is Flagellar L-ring protein.